Reading from the N-terminus, the 166-residue chain is Phospholipase A2 inhibitor (166 aa).

A signal peptide spans 1–19 (MRLILLSGLLLLGIFLANG). A C-type lectin domain is found at 46 to 161 (LKGSFLIVHK…CDDNLLVVCE (116 aa)). Cystine bridges form between C83–C160 and C138–C152. N122 carries N-linked (GlcNAc...) asparagine glycosylation.

This sequence belongs to the alpha-type phospholipase A2 inhibitor family. Homotrimer; non-covalently linked. Expressed by the liver.

Its subcellular location is the secreted. This phospholipase A2 inhibitor binds directly phospholipase A2 in the presence or absence of calcium. The polypeptide is Phospholipase A2 inhibitor (Bothrops jararacussu (Jararacussu)).